The primary structure comprises 508 residues: Protein S-acyltransferase 18 (508 aa).

The next 2 membrane-spanning stretches (helical) occupy residues 17 to 37 (IVGA…LGFF) and 42 to 62 (IAVI…IVLF). The DHHC domain maps to 158–208 (SYCSLCDLEVKRSSKHCRTCNRCVEGFDHHCRWLNNCVGKKNYTTFILLMV). Cys-188 functions as the S-palmitoyl cysteine intermediate in the catalytic mechanism. A run of 2 helical transmembrane segments spans residues 203–223 (FILL…TALA) and 250–270 (WALA…SAAM). The tract at residues 443-468 (VSPGRFSSPRRRFSGSSSSTVPSPKQ) is disordered. Over residues 456–466 (SGSSSSTVPSP) the composition is skewed to low complexity.

The protein belongs to the DHHC palmitoyltransferase family.

It is found in the endoplasmic reticulum membrane. The protein resides in the cytoplasmic vesicle membrane. It catalyses the reaction L-cysteinyl-[protein] + hexadecanoyl-CoA = S-hexadecanoyl-L-cysteinyl-[protein] + CoA. In terms of biological role, S-acyltransferase involved in protein lipid modification. The chain is Protein S-acyltransferase 18 (PAT18) from Arabidopsis thaliana (Mouse-ear cress).